The primary structure comprises 144 residues: Large ribosomal subunit protein uL15 (144 aa).

Positions 1-58 are disordered; that stretch reads MRLNTLSPAAGSKPSKKRVGRGIGSGLGKTGGRGHKGQKSRSGGSVRPGFEGGQMPLK. The segment covering 21-31 has biased composition (gly residues); it reads RGIGSGLGKTG.

Belongs to the universal ribosomal protein uL15 family. In terms of assembly, part of the 50S ribosomal subunit.

Its function is as follows. Binds to the 23S rRNA. This chain is Large ribosomal subunit protein uL15, found in Vibrio atlanticus (strain LGP32) (Vibrio splendidus (strain Mel32)).